Reading from the N-terminus, the 132-residue chain is Small ribosomal subunit protein uS8c (132 aa).

This sequence belongs to the universal ribosomal protein uS8 family. In terms of assembly, part of the 30S ribosomal subunit.

The protein resides in the plastid. The protein localises to the chloroplast. Its function is as follows. One of the primary rRNA binding proteins, it binds directly to 16S rRNA central domain where it helps coordinate assembly of the platform of the 30S subunit. In Cycas taitungensis (Prince sago), this protein is Small ribosomal subunit protein uS8c (rps8).